A 492-amino-acid polypeptide reads, in one-letter code: 2,3-bisphosphoglycerate-independent phosphoglycerate mutase (492 aa).

Asp-11 and Ser-61 together coordinate Mn(2+). Catalysis depends on Ser-61, which acts as the Phosphoserine intermediate. Substrate is bound by residues His-118, 147 to 148 (RD), Arg-177, Arg-183, 248 to 251 (RSDR), and Lys-321. Asp-387, His-391, Asp-428, His-429, and His-446 together coordinate Mn(2+).

It belongs to the BPG-independent phosphoglycerate mutase family. In terms of assembly, monomer. Requires Mn(2+) as cofactor.

The enzyme catalyses (2R)-2-phosphoglycerate = (2R)-3-phosphoglycerate. Its pathway is carbohydrate degradation; glycolysis; pyruvate from D-glyceraldehyde 3-phosphate: step 3/5. Catalyzes the interconversion of 2-phosphoglycerate and 3-phosphoglycerate. This chain is 2,3-bisphosphoglycerate-independent phosphoglycerate mutase, found in Wolinella succinogenes (strain ATCC 29543 / DSM 1740 / CCUG 13145 / JCM 31913 / LMG 7466 / NCTC 11488 / FDC 602W) (Vibrio succinogenes).